A 425-amino-acid polypeptide reads, in one-letter code: cAMP/cGMP-dependent 3',5'-cAMP/cGMP phosphodiesterase 7 (425 aa).

Residues 1–17 form the signal peptide; the sequence is MKYLILILIFFIEINNG.

It belongs to the cyclic nucleotide phosphodiesterase class-II family.

It localises to the secreted. Its subcellular location is the extracellular space. The protein localises to the cell surface. It carries out the reaction 3',5'-cyclic AMP + H2O = AMP + H(+). The catalysed reaction is 3',5'-cyclic GMP + H2O = GMP + H(+). With respect to regulation, inhibited by dithiotreitol (DTT). In terms of biological role, phosphodiesterase with dual cAMP/cGMP specificity. However, displays a preference for cAMP over cGMP. Seems to regulate cAMP/cGMP concentration especially during cell aggregation. The protein is cAMP/cGMP-dependent 3',5'-cAMP/cGMP phosphodiesterase 7 (pde7) of Dictyostelium discoideum (Social amoeba).